We begin with the raw amino-acid sequence, 255 residues long: Taurine import ATP-binding protein TauB (255 aa).

The region spanning 2–229 (LQISHLYADY…RFVAGESSRS (228 aa)) is the ABC transporter domain. Position 34–41 (34–41 (GPSGCGKT)) interacts with ATP.

Belongs to the ABC transporter superfamily. Taurine importer (TC 3.A.1.17.1) family. In terms of assembly, the complex is composed of two ATP-binding proteins (TauB), two transmembrane proteins (TauC) and a solute-binding protein (TauA).

Its subcellular location is the cell inner membrane. It catalyses the reaction taurine(out) + ATP + H2O = taurine(in) + ADP + phosphate + H(+). In terms of biological role, part of the ABC transporter complex TauABC involved in taurine import. Responsible for energy coupling to the transport system. This chain is Taurine import ATP-binding protein TauB, found in Escherichia coli O6:H1 (strain CFT073 / ATCC 700928 / UPEC).